A 37-amino-acid chain; its full sequence is Large ribosomal subunit protein bL36 (37 aa).

Belongs to the bacterial ribosomal protein bL36 family.

The protein is Large ribosomal subunit protein bL36 of Shewanella woodyi (strain ATCC 51908 / MS32).